The following is a 98-amino-acid chain: UPF0235 protein APJL_1398 (98 aa).

Belongs to the UPF0235 family.

The sequence is that of UPF0235 protein APJL_1398 from Actinobacillus pleuropneumoniae serotype 3 (strain JL03).